The chain runs to 351 residues: D-threonate 4-phosphate dehydrogenase (351 aa).

H147 and T148 together coordinate substrate. Residues H177, H221, and H276 each coordinate a divalent metal cation. Substrate contacts are provided by K284, N293, and R302.

Belongs to the PdxA family. PdxA2 subfamily. In terms of assembly, homodimer. The cofactor is a divalent metal cation.

It carries out the reaction 4-O-phospho-D-threonate + NAD(+) = dihydroxyacetone phosphate + CO2 + NADH. Its function is as follows. Catalyzes the NAD-dependent oxidation and subsequent decarboxylation of D-threonate 4-phosphate to produce dihydroxyacetone phosphate (DHAP). Can also use 4-hydroxy-L-threonine 4-phosphate as substrate. The chain is D-threonate 4-phosphate dehydrogenase from Bordetella bronchiseptica (strain ATCC BAA-588 / NCTC 13252 / RB50) (Alcaligenes bronchisepticus).